Here is a 284-residue protein sequence, read N- to C-terminus: 2-dehydro-3-deoxyphosphooctonate aldolase (284 aa).

It belongs to the KdsA family.

It is found in the cytoplasm. The enzyme catalyses D-arabinose 5-phosphate + phosphoenolpyruvate + H2O = 3-deoxy-alpha-D-manno-2-octulosonate-8-phosphate + phosphate. It participates in carbohydrate biosynthesis; 3-deoxy-D-manno-octulosonate biosynthesis; 3-deoxy-D-manno-octulosonate from D-ribulose 5-phosphate: step 2/3. Its pathway is bacterial outer membrane biogenesis; lipopolysaccharide biosynthesis. The chain is 2-dehydro-3-deoxyphosphooctonate aldolase from Glaesserella parasuis serovar 5 (strain SH0165) (Haemophilus parasuis).